Here is a 241-residue protein sequence, read N- to C-terminus: Methylthioribulose-1-phosphate dehydratase (241 aa).

Position 100 (C100) interacts with substrate. Zn(2+) contacts are provided by H117 and H119. The Proton donor/acceptor role is filled by E146. Residue H202 participates in Zn(2+) binding.

This sequence belongs to the aldolase class II family. MtnB subfamily. Zn(2+) is required as a cofactor.

Its subcellular location is the cytoplasm. The catalysed reaction is 5-(methylsulfanyl)-D-ribulose 1-phosphate = 5-methylsulfanyl-2,3-dioxopentyl phosphate + H2O. It participates in amino-acid biosynthesis; L-methionine biosynthesis via salvage pathway; L-methionine from S-methyl-5-thio-alpha-D-ribose 1-phosphate: step 2/6. Its function is as follows. Catalyzes the dehydration of methylthioribulose-1-phosphate (MTRu-1-P) into 2,3-diketo-5-methylthiopentyl-1-phosphate (DK-MTP-1-P). The sequence is that of Methylthioribulose-1-phosphate dehydratase from Ajellomyces dermatitidis (strain ER-3 / ATCC MYA-2586) (Blastomyces dermatitidis).